The chain runs to 354 residues: uncharacterized protein (354 aa).

Belongs to the asfivirus B354L family.

This is an uncharacterized protein from Ornithodoros (relapsing fever ticks).